Reading from the N-terminus, the 428-residue chain is Adenylosuccinate synthetase (428 aa).

Residues 12-18 and 40-42 contribute to the GTP site; these read GDEGKGK and GHT. Asp-13 serves as the catalytic Proton acceptor. Mg(2+) contacts are provided by Asp-13 and Gly-40. IMP-binding positions include 13–16, 38–41, Thr-129, Arg-143, Gln-224, Thr-239, and Arg-303; these read DEGK and NAGH. The active-site Proton donor is the His-41. 299–305 provides a ligand contact to substrate; sequence VTTGRIR. GTP is bound by residues Arg-305, 331–333, and 410–412; these read KVD and AYG.

This sequence belongs to the adenylosuccinate synthetase family. Homodimer. The cofactor is Mg(2+).

The protein resides in the cytoplasm. The catalysed reaction is IMP + L-aspartate + GTP = N(6)-(1,2-dicarboxyethyl)-AMP + GDP + phosphate + 2 H(+). It functions in the pathway purine metabolism; AMP biosynthesis via de novo pathway; AMP from IMP: step 1/2. In terms of biological role, plays an important role in the de novo pathway of purine nucleotide biosynthesis. Catalyzes the first committed step in the biosynthesis of AMP from IMP. This chain is Adenylosuccinate synthetase, found in Francisella tularensis subsp. holarctica (strain FTNF002-00 / FTA).